The primary structure comprises 660 residues: uncharacterized protein (660 aa).

A disordered region spans residues Ala-220–Asp-239. Over residues Ala-222–Asp-239 the composition is skewed to low complexity.

This is an uncharacterized protein from Callospermophilus lateralis (Golden-mantled ground squirrel).